An 87-amino-acid chain; its full sequence is Small ribosomal subunit protein bS18 (87 aa).

The segment covering 1–19 has biased composition (basic residues); sequence MSTRSRARKRSRVRSRTRR. Residues 1–25 are disordered; sequence MSTRSRARKRSRVRSRTRRKDPIFV.

This sequence belongs to the bacterial ribosomal protein bS18 family. As to quaternary structure, part of the 30S ribosomal subunit. Forms a tight heterodimer with protein bS6.

In terms of biological role, binds as a heterodimer with protein bS6 to the central domain of the 16S rRNA, where it helps stabilize the platform of the 30S subunit. This chain is Small ribosomal subunit protein bS18, found in Rhodopirellula baltica (strain DSM 10527 / NCIMB 13988 / SH1).